The following is a 458-amino-acid chain: ATP synthase subunit beta (458 aa).

Residue 148–155 (GGAGVGKT) participates in ATP binding.

The protein belongs to the ATPase alpha/beta chains family. As to quaternary structure, F-type ATPases have 2 components, CF(1) - the catalytic core - and CF(0) - the membrane proton channel. CF(1) has five subunits: alpha(3), beta(3), gamma(1), delta(1), epsilon(1). CF(0) has three main subunits: a(1), b(2) and c(9-12). The alpha and beta chains form an alternating ring which encloses part of the gamma chain. CF(1) is attached to CF(0) by a central stalk formed by the gamma and epsilon chains, while a peripheral stalk is formed by the delta and b chains.

The protein resides in the cell inner membrane. The catalysed reaction is ATP + H2O + 4 H(+)(in) = ADP + phosphate + 5 H(+)(out). In terms of biological role, produces ATP from ADP in the presence of a proton gradient across the membrane. The catalytic sites are hosted primarily by the beta subunits. In Stutzerimonas stutzeri (strain A1501) (Pseudomonas stutzeri), this protein is ATP synthase subunit beta.